A 232-amino-acid chain; its full sequence is Large ribosomal subunit protein uL1 (232 aa).

This sequence belongs to the universal ribosomal protein uL1 family. As to quaternary structure, part of the 50S ribosomal subunit.

Its function is as follows. Binds directly to 23S rRNA. The L1 stalk is quite mobile in the ribosome, and is involved in E site tRNA release. In terms of biological role, protein L1 is also a translational repressor protein, it controls the translation of the L11 operon by binding to its mRNA. This Thermosipho africanus (strain TCF52B) protein is Large ribosomal subunit protein uL1.